We begin with the raw amino-acid sequence, 255 residues long: 4-hydroxy-tetrahydrodipicolinate reductase (255 aa).

NAD(+) is bound by residues 8–13 (GASGRM), 89–91 (GTT), and 114–117 (SSNY). Catalysis depends on His-146, which acts as the Proton donor/acceptor. His-147 lines the (S)-2,3,4,5-tetrahydrodipicolinate pocket. Lys-150 (proton donor) is an active-site residue. A (S)-2,3,4,5-tetrahydrodipicolinate-binding site is contributed by 156-157 (GT).

Belongs to the DapB family.

It localises to the cytoplasm. It catalyses the reaction (S)-2,3,4,5-tetrahydrodipicolinate + NAD(+) + H2O = (2S,4S)-4-hydroxy-2,3,4,5-tetrahydrodipicolinate + NADH + H(+). The enzyme catalyses (S)-2,3,4,5-tetrahydrodipicolinate + NADP(+) + H2O = (2S,4S)-4-hydroxy-2,3,4,5-tetrahydrodipicolinate + NADPH + H(+). The protein operates within amino-acid biosynthesis; L-lysine biosynthesis via DAP pathway; (S)-tetrahydrodipicolinate from L-aspartate: step 4/4. Its function is as follows. Catalyzes the conversion of 4-hydroxy-tetrahydrodipicolinate (HTPA) to tetrahydrodipicolinate. This is 4-hydroxy-tetrahydrodipicolinate reductase from Methanoregula boonei (strain DSM 21154 / JCM 14090 / 6A8).